The primary structure comprises 604 residues: MLPYQDKVGAFYKDNARANSTKLSLVTEGHGGRRPPYLLFVLLILLVGILALLAITGVRFHQVSTSNMEFSRLLKEDMEKSEAVHHQVIDVLTPLFKIIGDEIGLRLPQKLNEIKQFILQKTNFFNPNREFDFRDLHWCINPPSTVKVNFTNYCESIGIRKAIASAANPILLSALSGGRGDIFPPHRCSGATTSVGKVFPLSVSLSMSLISRTSEVINMLTAISDGVYGKTYLLVPDDIEREFDTREIRVFEIGFIKRWLNDMPLLQTTNYMVLPKNSKAKVCTIAVGELTLASLCVEESTVLLYHDSSGSQDGILVVTLGIFWATPMDHIEEVIPVAHPSMKKIHITNHRGFIKDSIATWMVPALASEKQEEQKGCLESACQRKTYPMCNQASWEPFGGRQLPSYGRLTLPLDASVDLQLNISFTYGPVILNGDGMDYYESPLLNSGWLTIPPKDGTISGLINKAGRGDQFTVLPHVLTFAPRESSGNCYLPIQTSQIRDRDVLIESNIVVLPTQSIRYVIATYDISRSDHAIVYYVYDPIRTISYTHPFRLTTKGRPDFLRIECFVWDDNLWCHQFYRFEADIANSTTSVENLVRIRFSCNR.

The Intravirion portion of the chain corresponds to 1–37; it reads MLPYQDKVGAFYKDNARANSTKLSLVTEGHGGRRPPY. The helical transmembrane segment at 38–58 threads the bilayer; that stretch reads LLFVLLILLVGILALLAITGV. Residues 59–604 are Virion surface-facing; the sequence is RFHQVSTSNM…LVRIRFSCNR (546 aa). N-linked (GlcNAc...) asparagine; by host glycosylation is found at Asn149, Asn422, and Asn587.

The protein belongs to the paramyxoviruses hemagglutinin-neuraminidase family. Non-sialidase subfamily. In terms of assembly, binds canine SLAMF1 at the cell surface.

The protein resides in the virion membrane. The protein localises to the host cell membrane. In terms of biological role, attaches the virus to cell receptors and thereby initiating infection. Binding of H protein to the receptor induces a conformational change that allows the F protein to trigger virion/cell membranes fusion. The cellular receptor might be SLAM, and may explain the lymphotropism of the virus. This Ailuropoda melanoleuca (Giant panda) protein is Hemagglutinin glycoprotein (H).